Consider the following 371-residue polypeptide: Putative phosphoserine aminotransferase (371 aa).

Position 45 (Arg-45) interacts with L-glutamate. Phe-103, Thr-149, Asp-171, and Gln-194 together coordinate pyridoxal 5'-phosphate. Lys-195 bears the N6-(pyridoxal phosphate)lysine mark. A pyridoxal 5'-phosphate-binding site is contributed by 246–247; sequence NT.

The protein belongs to the class-V pyridoxal-phosphate-dependent aminotransferase family. SerC subfamily. As to quaternary structure, homodimer. Pyridoxal 5'-phosphate serves as cofactor.

The protein resides in the cytoplasm. It carries out the reaction O-phospho-L-serine + 2-oxoglutarate = 3-phosphooxypyruvate + L-glutamate. The catalysed reaction is 4-(phosphooxy)-L-threonine + 2-oxoglutarate = (R)-3-hydroxy-2-oxo-4-phosphooxybutanoate + L-glutamate. The protein operates within amino-acid biosynthesis; L-serine biosynthesis; L-serine from 3-phospho-D-glycerate: step 2/3. It participates in cofactor biosynthesis; pyridoxine 5'-phosphate biosynthesis; pyridoxine 5'-phosphate from D-erythrose 4-phosphate: step 3/5. Its function is as follows. Catalyzes the reversible conversion of 3-phosphohydroxypyruvate to phosphoserine and of 3-hydroxy-2-oxo-4-phosphonooxybutanoate to phosphohydroxythreonine. The sequence is that of Putative phosphoserine aminotransferase from Mycolicibacterium vanbaalenii (strain DSM 7251 / JCM 13017 / BCRC 16820 / KCTC 9966 / NRRL B-24157 / PYR-1) (Mycobacterium vanbaalenii).